A 142-amino-acid polypeptide reads, in one-letter code: Hemoglobin subunit alpha-A (142 aa).

The Globin domain maps to 2-142; the sequence is VLSAADKTNV…VGTVLTAKYR (141 aa). His-59 contributes to the O2 binding site. His-88 is a binding site for heme b.

It belongs to the globin family. In terms of assembly, heterotetramer of two alpha chains and two beta chains. As to expression, red blood cells.

Involved in oxygen transport from the lung to the various peripheral tissues. This Anser indicus (Bar-headed goose) protein is Hemoglobin subunit alpha-A (HBAA).